The primary structure comprises 188 residues: MENELKLYYAVSSQNENLVIQLLNKGYNPNAINRFKYMIPLHKAVECRNVDITKHLLSNGADANVRDFLGLGVFHILSMFSSLPELKDILHNTEGTFVLCKYNYAPLEEDYEVKTLEIARMLFISKANINMTSKLGSTPLHIASKYNNKTMVKFFLERGADINILDSNNNTPLIYAVCSVIRLYLKCY.

ANK repeat units follow at residues 2-31 (ENELKLYYAVSSQNENLVIQLLNKGYNPNA), 36-65 (KYMIPLHKAVECRNVDITKHLLSNGADANV), 135-164 (LGSTPLHIASKYNNKTMVKFFLERGADINI), and 168-187 (NNNTPLIYAVCSVIRLYLKC).

The polypeptide is Putative ankyrin repeat protein FPV230 (Vertebrata (FPV)).